A 529-amino-acid chain; its full sequence is DNA polymerase lambda (529 aa).

Residues 14 to 109 form the BRCT domain; sequence DPEGMFAGMV…EKANEDLYVL (96 aa). The disordered stretch occupies residues 119-199; it reads PKKSLPAISG…ESTSVYKPPD (81 aa). Over residues 153–175 the composition is skewed to polar residues; the sequence is SHSNTQGSPDSPTSCSVPSTSAS. Residues 182 to 193 are compositionally biased toward low complexity; the sequence is ETPTSPQSESTS. Positions 213–227 are DNA-binding; that stretch reads NIYRALGEDRRSFSY. His-260 is a catalytic residue. The DNA-binding stretch occupies residues 295–298; sequence GPAT. Residues Arg-336, 367–370, and 376–379 each bind dCTP; these read SYRR and GDLD. Residues 370-379 form an involved in primer binding region; it reads RGKATCGDLD. 3 residues coordinate Mn(2+): Asp-377, Asp-379, and Asp-444. The segment at 418–459 is DNA-binding; sequence EEGTDSGVDTYFGLCTYPGQELRRRIDFKVYPRDIYSFGLIA. Asn-467 serves as a coordination point for dCTP.

Belongs to the DNA polymerase type-X family. As to quaternary structure, interacts with the DNA repair proteins XRCC4 and LIG4. Interacts with HSP90-1. Mn(2+) is required as a cofactor.

It localises to the nucleus. It carries out the reaction DNA(n) + a 2'-deoxyribonucleoside 5'-triphosphate = DNA(n+1) + diphosphate. Repair polymerase involved in base excision repair (BER) and responsible for repair of lesions that give rise to abasic (AP) sites in DNA. Has both DNA polymerase and terminal transferase activities. Has a 5'-deoxyribose-5-phosphate lyase (dRP lyase) activity. Involved in the repair of transposon-induced DNA double strand breaks (DSBs). Involved in repair of UV-B-mediated DNA damage during seedling development through an excision repair mechanism. Involved the repair of DSBs induced by high salinity and DNA cross-linking agent. Functions via the DNA non-homologous end joining (NHEJ) pathway. The chain is DNA polymerase lambda from Arabidopsis thaliana (Mouse-ear cress).